The primary structure comprises 299 residues: GTPase Era (299 aa).

In terms of domain architecture, Era-type G spans 5 to 172 (KSGFVSIIGR…IDVLKTYLPE (168 aa)). The segment at 13 to 20 (GRPNVGKS) is G1. Position 13-20 (13-20 (GRPNVGKS)) interacts with GTP. A G2 region spans residues 39-43 (QTTRN). The G3 stretch occupies residues 60-63 (DTPG). GTP-binding positions include 60 to 64 (DTPGI) and 122 to 125 (NKID). The interval 122-125 (NKID) is G4. The segment at 151-153 (ISA) is G5. One can recognise a KH type-2 domain in the interval 203-280 (TSEEIPHAIG…YLELWVKVQR (78 aa)).

It belongs to the TRAFAC class TrmE-Era-EngA-EngB-Septin-like GTPase superfamily. Era GTPase family. Monomer.

It localises to the cytoplasm. It is found in the cell membrane. Functionally, an essential GTPase that binds both GDP and GTP, with rapid nucleotide exchange. Plays a role in 16S rRNA processing and 30S ribosomal subunit biogenesis and possibly also in cell cycle regulation and energy metabolism. This Staphylococcus aureus (strain NCTC 8325 / PS 47) protein is GTPase Era.